The following is a 181-amino-acid chain: Large ribosomal subunit protein uL5c (181 aa).

Belongs to the universal ribosomal protein uL5 family. In terms of assembly, part of the 50S ribosomal subunit; contacts the 5S rRNA.

Its subcellular location is the plastid. It localises to the chloroplast. Functionally, binds 5S rRNA, forms part of the central protuberance of the 50S subunit. In Rhodomonas salina (Cryptomonas salina), this protein is Large ribosomal subunit protein uL5c (rpl5).